The primary structure comprises 664 residues: uncharacterized protein (664 aa).

Positions 1 to 35 (MGVSVLTFHVSLFLKRILSIAFFLLSLSTLLRIVN) are cleaved as a signal peptide. Residues Asn-101 and Asn-138 are each glycosylated (N-linked (GlcNAc...) asparagine). 2 Sel1-like repeats span residues 141-178 (AFANNMMGFFYSTSFSEYASNNPALARIHWELAAKQGS) and 179-214 (LDAHQFLAYHNLIALNMPQSDEEAVKHYKFISDHLF). Asn-221, Asn-300, and Asn-371 each carry an N-linked (GlcNAc...) asparagine glycan. 4 Sel1-like repeats span residues 337–372 (AQSCGYLGLLHLFDKGPLFDIDKAYWWFKRGATKND), 373–409 (SNSYYGLGYMAYHGLTSNGVDREKGMRLINLAVMNEN), 410–441 (PHALMFLGLIRLEEARYEEAYHLFLRAATQKS), and 442–477 (VISYKYLADCYYNGTGTSRSMISASLYYKKFVEAIR). N-linked (GlcNAc...) asparagine glycosylation is found at Asn-454 and Asn-537. Sel1-like repeat units lie at residues 564-599 (IDAIFKLGDYYYYGIGTPKDYSKAYTCYKIAYEQSS) and 601-636 (GMGLWNMAYMHEYGIGRDQDIYIARRLLDELSSNQN).

This sequence belongs to the sel-1 family.

This is an uncharacterized protein from Schizosaccharomyces pombe (strain 972 / ATCC 24843) (Fission yeast).